The primary structure comprises 343 residues: Heat-inducible transcription repressor HrcA (343 aa).

This sequence belongs to the HrcA family.

Functionally, negative regulator of class I heat shock genes (grpE-dnaK-dnaJ and groELS operons). Prevents heat-shock induction of these operons. The polypeptide is Heat-inducible transcription repressor HrcA (Thermoanaerobacter sp. (strain X514)).